A 211-amino-acid chain; its full sequence is MNSLSTSAFSPVAFSLGLLLVMATAFPTPVPLGEDFKDGTTSNRPFTSPDKSEELIKYILGRISAMRKEMCEKYDKCENSKEALSENNLNLPKMTEKDGCFQSGFNQETCLMRITIGLLEFQIYLDYLQNYYEGDKGNTEAVQISTKALIQLLRQKVKQPEEVSTPNPITGSSLLNKLQTENQWMKNTKMILILRSLEDFLQFSLRAVRIM.

Residues 1–29 (MNSLSTSAFSPVAFSLGLLLVMATAFPTP) form the signal peptide. Cys71 and Cys77 are joined by a disulfide. At Ser80 the chain carries Phosphoserine. A disulfide bond links Cys100 and Cys110.

Belongs to the IL-6 superfamily. In terms of assembly, component of a hexamer of two molecules each of IL6, IL6R and IL6ST; first binds to IL6R to associate with the signaling subunit IL6ST. Interacts with IL6R (via the N-terminal ectodomain); this interaction may be affected by IL6R-binding with SORL1, hence decreasing IL6 cis signaling. Interacts with SORL1 (via the N-terminal ectodomain); this interaction leads to IL6 internalization and lysosomal degradation. May form a trimeric complex with the soluble SORL1 ectodomain and soluble IL6R receptor; this interaction might stabilize circulating IL6, hence promoting IL6 trans signaling.

It is found in the secreted. Functionally, cytokine with a wide variety of biological functions in immunity, tissue regeneration, and metabolism. Binds to IL6R, then the complex associates to the signaling subunit IL6ST/gp130 to trigger the intracellular IL6-signaling pathway. The interaction with the membrane-bound IL6R and IL6ST stimulates 'classic signaling', whereas the binding of IL6 and soluble IL6R to IL6ST stimulates 'trans-signaling'. Alternatively, 'cluster signaling' occurs when membrane-bound IL6:IL6R complexes on transmitter cells activate IL6ST receptors on neighboring receiver cells. IL6 is a potent inducer of the acute phase response. Rapid production of IL6 contributes to host defense during infection and tissue injury, but excessive IL6 synthesis is involved in disease pathology. In the innate immune response, is synthesized by myeloid cells, such as macrophages and dendritic cells, upon recognition of pathogens through toll-like receptors (TLRs) at the site of infection or tissue injury. In the adaptive immune response, is required for the differentiation of B cells into immunoglobulin-secreting cells. Plays a major role in the differentiation of CD4(+) T cell subsets. Essential factor for the development of T follicular helper (Tfh) cells that are required for the induction of germinal-center formation. Required to drive naive CD4(+) T cells to the Th17 lineage. Also required for proliferation of myeloma cells and the survival of plasmablast cells. Its function is as follows. Acts as an essential factor in bone homeostasis and on vessels directly or indirectly by induction of VEGF, resulting in increased angiogenesis activity and vascular permeability. Induces, through 'trans-signaling' and synergistically with IL1B and TNF, the production of VEGF. Involved in metabolic controls, is discharged into the bloodstream after muscle contraction increasing lipolysis and improving insulin resistance. 'Trans-signaling' in central nervous system also regulates energy and glucose homeostasis. Mediates, through GLP-1, crosstalk between insulin-sensitive tissues, intestinal L cells and pancreatic islets to adapt to changes in insulin demand. Also acts as a myokine. Plays a protective role during liver injury, being required for maintenance of tissue regeneration. Also has a pivotal role in iron metabolism by regulating HAMP/hepcidin expression upon inflammation or bacterial infection. Through activation of IL6ST-YAP-NOTCH pathway, induces inflammation-induced epithelial regeneration. The chain is Interleukin-6 (IL6) from Camelus bactrianus (Bactrian camel).